Consider the following 729-residue polypeptide: Glycine--tRNA ligase (729 aa).

A mitochondrion-targeting transit peptide spans 1 to 33 (MPCLLPSLLRATRAALPLLSPPRVVAASASQRL). The WHEP-TRS domain occupies 53 to 109 (LLAPLRLAVRQQGDFVRKLKEDKAPQVDVDRAVAELKARKRVLEAKELALQPKDDIV). Position 194 is an N6-acetyllysine (K194). E289 is a glycine binding site. Residues 321 to 323 (RNE) and 332 to 333 (RV) each bind ATP. E340 contributes to the glycine binding site. Y443 is modified (phosphotyrosine). Residue 447–448 (EI) coordinates ATP. Position 491 is an N6-acetyllysine (K491). Position 566–568 (566–568 (EPS)) interacts with glycine. R573 serves as a coordination point for ATP. A Phosphoserine modification is found at S690. T726 carries the post-translational modification Phosphothreonine.

The protein belongs to the class-II aminoacyl-tRNA synthetase family. In terms of assembly, homodimer.

The protein localises to the cytoplasm. It is found in the mitochondrion. The protein resides in the cell projection. Its subcellular location is the axon. It localises to the secreted. The protein localises to the extracellular exosome. It catalyses the reaction tRNA(Gly) + glycine + ATP = glycyl-tRNA(Gly) + AMP + diphosphate. The enzyme catalyses 2 ATP + H(+) = P(1),P(4)-bis(5'-adenosyl) tetraphosphate + diphosphate. Its function is as follows. Catalyzes the ATP-dependent ligation of glycine to the 3'-end of its cognate tRNA, via the formation of an aminoacyl-adenylate intermediate (Gly-AMP). Also produces diadenosine tetraphosphate (Ap4A), a universal pleiotropic signaling molecule needed for cell regulation pathways, by direct condensation of 2 ATPs. Thereby, may play a special role in Ap4A homeostasis. This Mus musculus (Mouse) protein is Glycine--tRNA ligase (Gars1).